Consider the following 1003-residue polypeptide: Retinoblastoma-related protein 1 (1003 aa).

The domain A stretch occupies residues 405-607 (TPVSTAMTTA…EKGSSMYNSL (203 aa)). Residues 405 to 860 (TPVSTAMTTA…NEMFIPSVKP (456 aa)) are pocket. The tract at residues 608-729 (AVAKPSLAAE…PGGGGETCAE (122 aa)) is spacer. The segment at 730 to 860 (TAINVFFGKI…NEMFIPSVKP (131 aa)) is domain B. The interval 868–899 (AGNNSEKNDHNDGQGPASPKPSPFPKLPDMSP) is disordered.

The protein belongs to the retinoblastoma protein (RB) family. Expressed in roots, stems, leaves and flowers.

It localises to the nucleus. Its function is as follows. Regulator of biological processes that recruits a histone deacetylase to control gene transcription. Formation of stable complexes with geminiviridae replication-associated proteins may create a cellular environment which favors viral DNA replication. May play a role in the entry into mitosis, negatively regulating the cell proliferation during leaf, stem, and flower development. Critical regulator of the endocycle. The chain is Retinoblastoma-related protein 1 (RBR1) from Nicotiana benthamiana.